The following is a 632-amino-acid chain: Maltase 1 (632 aa).

Positions 1–29 (MEEGERWREGHVYQRSSETRKPTNYDRPD) are enriched in basic and acidic residues. Positions 1–30 (MEEGERWREGHVYQRSSETRKPTNYDRPDS) are disordered. N-linked (GlcNAc...) asparagine glycosylation is found at Asn-179 and Asn-212. Catalysis depends on Asp-280, which acts as the Nucleophile. N-linked (GlcNAc...) asparagine glycosylation is present at Asn-333. Residue Glu-348 is the Proton donor of the active site. 3 N-linked (GlcNAc...) asparagine glycosylation sites follow: Asn-461, Asn-575, and Asn-578.

Belongs to the glycosyl hydrolase 13 family.

It catalyses the reaction Hydrolysis of terminal, non-reducing (1-&gt;4)-linked alpha-D-glucose residues with release of alpha-D-glucose.. This chain is Maltase 1 (Mal-B1), found in Drosophila virilis (Fruit fly).